An 843-amino-acid polypeptide reads, in one-letter code: MSIASQKKVKPSFVCLRCKQRKIKCDKLWPTCSKCKASSSICSYEVEPGRINKSPTIENAPHRDIRNITPASMSASGSFTSILNPSTKDWEMKNFAMNLSNAHDKLVVMNNTTIVDSPFAFHSILQHDLYAKALTTCIHERILIDVERHRENVSANNKKRELNLTIGDIGPLFFIDKAALKFIENTSKTSKLYPPIDFLYNTYDYEQAHPEENNDKISINILLEELSKYFLNKNEVDGLIVDFYKTIYPVYPLLEISLFEDNIRELLQLNEFNGYNIVFAGKDSRRKLETITLLTIILAFSYRRLSLSTSHSFKESFGVKSNNLTLLAHKLLALMNVFQYVNEHTLCCLLYFFILRYLNPDQADMYPTHSDILNLKFLENVAIKLGLNEEPFQYTRYVSESDDYPRLFNLRRKLWLGVQFLKFGILIPEGDSDILSLEYLRSFMKTDESLPELFERNYASTNNLDLSLMATAENIYHLHLSLQVLLTSCFPINGPSYLKEVLDNIDKTKDFLNQKFPLILSSLGEPRMKSLHINVPSSLANEESFDFSTFEENETFIANVISYTCTMNIYDSLSLHFENQCFKNALEYKTYYHRFTFTAIQDYLTLLKLISEYFNGSLLHLREPFGFATQKVVRFSIHRLLIFQATLLVRLFYKKDTCDRSSAAMGMLNDRNGRLSRVIEKMIKLMSYHMKLLVEIVISKLEKSYLGSFISVSIFRYIIYLVDTDALSAFISDYWKSDAVMDERYSRIHRIVGLKWGMGRDKSFSFTSKLNNPQFLGSLDLEILEELEKLISAQEFSRNFTEDVDESLQSEIDLMNYDNEALNQLMAIDLDKLLGIFPNLSNF.

Positions 15 to 42 form a DNA-binding region, zn(2)-C6 fungal-type; it reads CLRCKQRKIKCDKLWPTCSKCKASSSIC.

It is found in the nucleus. Its function is as follows. Required for growth on non-fermentable carbon sources. This is an uncharacterized protein from Saccharomyces cerevisiae (strain ATCC 204508 / S288c) (Baker's yeast).